Here is a 1071-residue protein sequence, read N- to C-terminus: DNA-directed RNA polymerase subunit beta (1071 aa).

This sequence belongs to the RNA polymerase beta chain family. In terms of assembly, in plastids the minimal PEP RNA polymerase catalytic core is composed of four subunits: alpha, beta, beta', and beta''. When a (nuclear-encoded) sigma factor is associated with the core the holoenzyme is formed, which can initiate transcription.

It localises to the plastid. The protein resides in the chloroplast. It carries out the reaction RNA(n) + a ribonucleoside 5'-triphosphate = RNA(n+1) + diphosphate. In terms of biological role, DNA-dependent RNA polymerase catalyzes the transcription of DNA into RNA using the four ribonucleoside triphosphates as substrates. The sequence is that of DNA-directed RNA polymerase subunit beta from Drimys granadensis.